The sequence spans 211 residues: Pyridoxine/pyridoxamine 5'-phosphate oxidase (211 aa).

Residues 7 to 10 (RREY) and Lys-65 contribute to the substrate site. FMN contacts are provided by residues 60 to 65 (RIVLLK), 75 to 76 (YT), Arg-81, Lys-82, and Gln-104. Residues Tyr-122, Arg-126, and Ser-130 each contribute to the substrate site. FMN contacts are provided by residues 139–140 (QS) and Trp-184. 190–192 (RLH) lines the substrate pocket. Arg-194 contacts FMN.

This sequence belongs to the pyridoxamine 5'-phosphate oxidase family. In terms of assembly, homodimer. FMN is required as a cofactor.

The catalysed reaction is pyridoxamine 5'-phosphate + O2 + H2O = pyridoxal 5'-phosphate + H2O2 + NH4(+). It catalyses the reaction pyridoxine 5'-phosphate + O2 = pyridoxal 5'-phosphate + H2O2. The protein operates within cofactor metabolism; pyridoxal 5'-phosphate salvage; pyridoxal 5'-phosphate from pyridoxamine 5'-phosphate: step 1/1. It functions in the pathway cofactor metabolism; pyridoxal 5'-phosphate salvage; pyridoxal 5'-phosphate from pyridoxine 5'-phosphate: step 1/1. In terms of biological role, catalyzes the oxidation of either pyridoxine 5'-phosphate (PNP) or pyridoxamine 5'-phosphate (PMP) into pyridoxal 5'-phosphate (PLP). The protein is Pyridoxine/pyridoxamine 5'-phosphate oxidase of Vibrio vulnificus (strain CMCP6).